Reading from the N-terminus, the 300-residue chain is 3-hydroxy-3-isohexenylglutaryl-CoA/hydroxy-methylglutaryl-CoA lyase (300 aa).

One can recognise a Pyruvate carboxyltransferase domain in the interval valine 7–valine 274. Arginine 15 is a binding site for substrate. A divalent metal cation-binding residues include aspartate 16, histidine 207, and histidine 209. Residue cysteine 240 is part of the active site. Asparagine 249 contacts a divalent metal cation.

It belongs to the HMG-CoA lyase family. In terms of assembly, homodimer. It depends on Mg(2+) as a cofactor. The cofactor is Mn(2+).

It carries out the reaction 3-hydroxy-3-(4-methylpent-3-en-1-yl)glutaryl-CoA = 7-methyl-3-oxooct-6-enoyl-CoA + acetate. The catalysed reaction is (3S)-3-hydroxy-3-methylglutaryl-CoA = acetoacetate + acetyl-CoA. It functions in the pathway metabolic intermediate metabolism; (S)-3-hydroxy-3-methylglutaryl-CoA degradation; acetoacetate from (S)-3-hydroxy-3-methylglutaryl-CoA: step 1/1. In terms of biological role, involved in the L-leucine, isovalerate and acyclic monoterpene catabolism. Catalyzes the cleavage of 3-hydroxy-3-methylglutaryl-CoA (HMG-CoA) to yield acetyl-CoA and acetoacetate. It can also catalyze the cleavage of 3-hydroxy-3-isohexenylglutaryl-CoA (HIHG_CoA) to yield 7-methyl-3-oxooct-6-enoyl-CoA and acetate. The protein is 3-hydroxy-3-isohexenylglutaryl-CoA/hydroxy-methylglutaryl-CoA lyase of Pseudomonas aeruginosa (strain ATCC 15692 / DSM 22644 / CIP 104116 / JCM 14847 / LMG 12228 / 1C / PRS 101 / PAO1).